A 33-amino-acid polypeptide reads, in one-letter code: Photosystem II reaction center protein Psb30 (33 aa).

A helical membrane pass occupies residues 5–25 (VIAQLTVLTLMVVSGPLVIVL).

Belongs to the Psb30/Ycf12 family. As to quaternary structure, PSII is composed of 1 copy each of membrane proteins PsbA, PsbB, PsbC, PsbD, PsbE, PsbF, PsbH, PsbI, PsbJ, PsbK, PsbL, PsbM, PsbT, PsbX, PsbY, PsbZ, Psb30/Ycf12, peripheral proteins of the oxygen-evolving complex and a large number of cofactors. It forms dimeric complexes.

It localises to the plastid. The protein localises to the chloroplast thylakoid membrane. In terms of biological role, a core subunit of photosystem II (PSII), probably helps stabilize the reaction center. The sequence is that of Photosystem II reaction center protein Psb30 from Pinus koraiensis (Korean pine).